The chain runs to 140 residues: uncharacterized protein (140 aa).

The N-terminal stretch at 1 to 22 (MRLRWQTIVLLLLILGGASASA) is a signal peptide.

This is an uncharacterized protein from Archaeoglobus fulgidus (strain ATCC 49558 / DSM 4304 / JCM 9628 / NBRC 100126 / VC-16).